Here is a 183-residue protein sequence, read N- to C-terminus: Glutathione-regulated potassium-efflux system ancillary protein KefG (183 aa).

The protein belongs to the NAD(P)H dehydrogenase (quinone) family. KefG subfamily. Interacts with KefB.

Its subcellular location is the cell inner membrane. It carries out the reaction a quinone + NADH + H(+) = a quinol + NAD(+). The catalysed reaction is a quinone + NADPH + H(+) = a quinol + NADP(+). Its function is as follows. Regulatory subunit of a potassium efflux system that confers protection against electrophiles. Required for full activity of KefB. This Escherichia coli O6:K15:H31 (strain 536 / UPEC) protein is Glutathione-regulated potassium-efflux system ancillary protein KefG.